The sequence spans 662 residues: Acyl-coenzyme A oxidase acox-1.4 (662 aa).

FAD contacts are provided by residues 148–151 (YAQT), 156–157 (GT), and Gly190. Residues 284–287 (KVNH) and Arg294 contribute to the substrate site. FAD contacts are provided by residues Arg319 and 339 to 342 (QQHR). The ATP site is built by His341, Ser391, His395, and Gln403. Gly410 contributes to the FAD binding site. 432–433 (YE) provides a ligand contact to substrate. Glu433 serves as the catalytic Proton acceptor. Glu435 contacts FAD. ATP is bound by residues 526–529 (RASR) and Tyr574. The Microbody targeting signal motif lies at 660–662 (AKL).

This sequence belongs to the acyl-CoA oxidase family. Homodimer. FAD serves as cofactor.

Its subcellular location is the peroxisome. It carries out the reaction asc-C9-CoA + O2 = asc-DeltaC9-CoA + H2O2. Its pathway is lipid metabolism; peroxisomal fatty acid beta-oxidation. Its activity is regulated as follows. Activated by ATP. ATP binding leads to a conformational change that promotes FAD cofactor binding and enzyme activity. ATP binding likely occurs during acox-1.4 folding and/or dimer formation. In terms of biological role, involved in the first step of peroxisomal beta-oxidation by catalyzing the desaturation of fatty acid-derived side chains of ascaroside pheromones, which regulates development and behavior. Specifically, shortens ascarosides with a 9-carbon side chain (asc-C9) and, in association with acox-1.1, may contribute to the shortening of ascarosides with a 11-carbon side chain (asc-C11). May contribute to the production of indol-3-carbonyl(IC)-ascarosides in association with acox-1.1 and acox-3. The chain is Acyl-coenzyme A oxidase acox-1.4 from Caenorhabditis elegans.